Consider the following 487-residue polypeptide: GTPase Der (487 aa).

EngA-type G domains follow at residues 2-164 (KTIA…SLAK) and 203-374 (IAVG…QRFA). GTP is bound by residues 8–15 (GKPNVGKS), 55–59 (DTGGI), 116–119 (NKVD), 209–216 (GRVNVGKS), 256–260 (DTAGI), and 320–323 (NKWD). Residues 375–459 (YRIPTSALND…PILLSVKGKN (85 aa)) enclose the KH-like domain. Residues 459-480 (NAKDEENTSAKKESPSKVSHRE) show a composition bias toward basic and acidic residues. The interval 459 to 487 (NAKDEENTSAKKESPSKVSHRESKNRRFV) is disordered.

It belongs to the TRAFAC class TrmE-Era-EngA-EngB-Septin-like GTPase superfamily. EngA (Der) GTPase family. As to quaternary structure, associates with the 50S ribosomal subunit.

In terms of biological role, GTPase that plays an essential role in the late steps of ribosome biogenesis. The polypeptide is GTPase Der (Helicobacter hepaticus (strain ATCC 51449 / 3B1)).